The sequence spans 108 residues: Nucleoid-associated protein Pmen_2646 (108 aa).

The interval 1–25 is disordered; sequence MMKGGMAGLMKQAQQMQEKMQKMQE.

It belongs to the YbaB/EbfC family. As to quaternary structure, homodimer.

Its subcellular location is the cytoplasm. The protein localises to the nucleoid. Functionally, binds to DNA and alters its conformation. May be involved in regulation of gene expression, nucleoid organization and DNA protection. This chain is Nucleoid-associated protein Pmen_2646, found in Ectopseudomonas mendocina (strain ymp) (Pseudomonas mendocina).